Consider the following 732-residue polypeptide: Anthranilate synthase (732 aa).

In terms of domain architecture, Glutamine amidotransferase type-1 spans 533-728 (RVLLVDHDDS…MDRLAAGALT (196 aa)). Residue 583–585 (GPG) participates in L-glutamine binding. Cys610 functions as the Nucleophile; for GATase activity in the catalytic mechanism. L-glutamine-binding positions include Gln614 and 660-661 (SL). Residues His699 and Glu701 each act as for GATase activity in the active site.

It carries out the reaction chorismate + L-glutamine = anthranilate + pyruvate + L-glutamate + H(+). The protein operates within amino-acid biosynthesis; L-tryptophan biosynthesis; L-tryptophan from chorismate: step 1/5. This is Anthranilate synthase (trpE(G)) from Azospirillum brasilense.